The chain runs to 284 residues: 4-hydroxybenzoate octaprenyltransferase (284 aa).

The next 9 helical transmembrane spans lie at 19–39 (IPIL…SHGL), 42–62 (ISYL…GCII), 85–105 (GQLS…VAFI), 107–127 (VLFL…LAIL), 134–154 (FFAI…FMAF), 165–185 (AWIF…IYAL), 211–231 (ILLF…YCDF), 233–253 (SFFY…YFLY), and 261–281 (CINA…IAVI).

It belongs to the UbiA prenyltransferase family. Mg(2+) is required as a cofactor.

The protein resides in the cell inner membrane. It carries out the reaction all-trans-octaprenyl diphosphate + 4-hydroxybenzoate = 4-hydroxy-3-(all-trans-octaprenyl)benzoate + diphosphate. It functions in the pathway cofactor biosynthesis; ubiquinone biosynthesis. Catalyzes the prenylation of para-hydroxybenzoate (PHB) with an all-trans polyprenyl group. Mediates the second step in the final reaction sequence of ubiquinone-8 (UQ-8) biosynthesis, which is the condensation of the polyisoprenoid side chain with PHB, generating the first membrane-bound Q intermediate 3-octaprenyl-4-hydroxybenzoate. The protein is 4-hydroxybenzoate octaprenyltransferase of Francisella tularensis subsp. holarctica (strain LVS).